The primary structure comprises 450 residues: Trigger factor (450 aa).

A PPIase FKBP-type domain is found at 161–246 (GDRVVIDFKG…VKTVEAPEYP (86 aa)). The segment at 422 to 450 (PMSLQELMSPQQPEAESAEGESKQDETKE) is disordered. Residues 441–450 (GESKQDETKE) show a composition bias toward basic and acidic residues.

It belongs to the FKBP-type PPIase family. Tig subfamily.

The protein localises to the cytoplasm. It catalyses the reaction [protein]-peptidylproline (omega=180) = [protein]-peptidylproline (omega=0). Its function is as follows. Involved in protein export. Acts as a chaperone by maintaining the newly synthesized protein in an open conformation. Functions as a peptidyl-prolyl cis-trans isomerase. The polypeptide is Trigger factor (Alkalilimnicola ehrlichii (strain ATCC BAA-1101 / DSM 17681 / MLHE-1)).